Reading from the N-terminus, the 215-residue chain is Imidazole glycerol phosphate synthase subunit HisH (215 aa).

The 208-residue stretch at 8-215 (KVVVFDYGFG…QLLNNWIGTL (208 aa)) folds into the Glutamine amidotransferase type-1 domain. The active-site Nucleophile is cysteine 86. Active-site residues include histidine 196 and glutamate 198.

Heterodimer of HisH and HisF.

It localises to the cytoplasm. The enzyme catalyses 5-[(5-phospho-1-deoxy-D-ribulos-1-ylimino)methylamino]-1-(5-phospho-beta-D-ribosyl)imidazole-4-carboxamide + L-glutamine = D-erythro-1-(imidazol-4-yl)glycerol 3-phosphate + 5-amino-1-(5-phospho-beta-D-ribosyl)imidazole-4-carboxamide + L-glutamate + H(+). The catalysed reaction is L-glutamine + H2O = L-glutamate + NH4(+). Its pathway is amino-acid biosynthesis; L-histidine biosynthesis; L-histidine from 5-phospho-alpha-D-ribose 1-diphosphate: step 5/9. Functionally, IGPS catalyzes the conversion of PRFAR and glutamine to IGP, AICAR and glutamate. The HisH subunit catalyzes the hydrolysis of glutamine to glutamate and ammonia as part of the synthesis of IGP and AICAR. The resulting ammonia molecule is channeled to the active site of HisF. This chain is Imidazole glycerol phosphate synthase subunit HisH, found in Streptomyces avermitilis (strain ATCC 31267 / DSM 46492 / JCM 5070 / NBRC 14893 / NCIMB 12804 / NRRL 8165 / MA-4680).